A 326-amino-acid polypeptide reads, in one-letter code: MTERYADKQIKLFSLTSNLPIAEKIAKAAGIPLGKMSSRQFSDGEIMINIEETVRGDHIYIIQSTSFPVNDNLWELLIMIDACKRASANTVNIVLPYFGYSRQDRVAKPREPITAKLVANMLTKAGIDRVVTLDLHAVQVQGFFDIPVDNLFTVPLFAERYSKLGLSGSDVVVVSPKNSGIKRARSLAEYLDSPIAIIDYAQDDSEREQGYIIGDVSGKKAILIDDILNTGKTFAEAAKILERSGATDTYAVASHGLFAGGAADVLETAPIKEIIVTDSVKTKNRVPENVTYLSASDLIAEAIIRIHERKPLSPLFSYQPKGKNNA.

Residues 43 to 45 (DGE) and 102 to 103 (RQ) contribute to the ATP site. His136 serves as a coordination point for Mg(2+). Residues Asp225 and 229-233 (NTGKT) contribute to the D-ribose 5-phosphate site.

Belongs to the ribose-phosphate pyrophosphokinase family. Class I subfamily. Homohexamer. Requires Mg(2+) as cofactor.

Its subcellular location is the cytoplasm. The enzyme catalyses D-ribose 5-phosphate + ATP = 5-phospho-alpha-D-ribose 1-diphosphate + AMP + H(+). Its pathway is metabolic intermediate biosynthesis; 5-phospho-alpha-D-ribose 1-diphosphate biosynthesis; 5-phospho-alpha-D-ribose 1-diphosphate from D-ribose 5-phosphate (route I): step 1/1. Involved in the biosynthesis of the central metabolite phospho-alpha-D-ribosyl-1-pyrophosphate (PRPP) via the transfer of pyrophosphoryl group from ATP to 1-hydroxyl of ribose-5-phosphate (Rib-5-P). This chain is Putative ribose-phosphate pyrophosphokinase 2, found in Streptococcus pyogenes serotype M18 (strain MGAS8232).